The sequence spans 75 residues: MISTSSILVLVVLLACFMAANAQWGYGGYGRGYGGYGGYGRGYGGYGGYGRGYGGYGRGMYGGYGRPYGGYGWGK.

A signal peptide spans 1-22; sequence MISTSSILVLVVLLACFMAANA. Tyrosine amide is present on residues tyrosine 29, tyrosine 39, tyrosine 49, tyrosine 56, and tyrosine 64. Tryptophan amide is present on tryptophan 73.

It belongs to the YARP (YGGW-amide related peptide) family. As to expression, expressed in hypoderm.

Its subcellular location is the secreted. Its function is as follows. Antimicrobial peptides that have antifungal activity against D.coniospora. Has weak antibacterial activity against Gram-positive bacteria M.luteus and Gram-negative E.coli. The protein is Neuropeptide-like protein 31 (nlp-31) of Caenorhabditis elegans.